A 428-amino-acid polypeptide reads, in one-letter code: 3-phosphoshikimate 1-carboxyvinyltransferase (428 aa).

Residues Lys23, Ser24, and Arg28 each coordinate 3-phosphoshikimate. Position 23 (Lys23) interacts with phosphoenolpyruvate. Phosphoenolpyruvate is bound by residues Gly97 and Arg125. 3-phosphoshikimate is bound by residues Ser170, Ser171, Gln172, Ser198, Asp314, Asn337, and Lys341. Residue Gln172 coordinates phosphoenolpyruvate. The active-site Proton acceptor is Asp314. Phosphoenolpyruvate is bound by residues Arg345, Arg387, and Lys412.

The protein belongs to the EPSP synthase family. In terms of assembly, monomer.

It localises to the cytoplasm. The catalysed reaction is 3-phosphoshikimate + phosphoenolpyruvate = 5-O-(1-carboxyvinyl)-3-phosphoshikimate + phosphate. It participates in metabolic intermediate biosynthesis; chorismate biosynthesis; chorismate from D-erythrose 4-phosphate and phosphoenolpyruvate: step 6/7. Catalyzes the transfer of the enolpyruvyl moiety of phosphoenolpyruvate (PEP) to the 5-hydroxyl of shikimate-3-phosphate (S3P) to produce enolpyruvyl shikimate-3-phosphate and inorganic phosphate. The protein is 3-phosphoshikimate 1-carboxyvinyltransferase of Edwardsiella ictaluri (strain 93-146).